The chain runs to 271 residues: Calretinin (271 aa).

EF-hand domains follow at residues 16 to 51 (LTAT…LEKA), 63 to 98 (NLGE…EENF), 107 to 142 (GSST…LLKK), 151 to 186 (KLQE…QENF), 195 to 230 (LTSE…LYEK), and 235 to 270 (MNIQ…SEPP). Ca(2+)-binding residues include D29, D31, N33, Y35, E40, D76, N78, D80, K82, E87, D120, D122, S124, Y126, E131, D164, N166, D168, K170, E175, D208, D210, S212, Y214, and E219. Y214 bears the Phosphotyrosine mark.

This sequence belongs to the calbindin family.

It localises to the synapse. The protein resides in the cell projection. It is found in the dendrite. In terms of biological role, calcium-binding protein involved in calcium homeostasis and signal transduction. It plays a critical role in buffering intracellular calcium levels and modulating calcium-dependent signaling pathways. Predominantly expressed in specific neuronal populations, influences synaptic plasticity and neuronal excitability, contributing to learning and memory. During embryonic development, it facilitates neuronal differentiation and maturation. This Bos taurus (Bovine) protein is Calretinin (CALB2).